Here is a 720-residue protein sequence, read N- to C-terminus: Pollen receptor-like kinase 1 (720 aa).

The stretch at 40-64 (LCSRGHLLIIFLLLVSPFNDAAVDV) is one LRR 1; degenerate repeat. The LRR 2; degenerate repeat unit spans residues 123-146 (LGVLCYEGDVWGLQLENLDLSGVI). LRR repeat units lie at residues 154–179 (LHFLRTLSFMNNSFKGQCLIGISLEP), 226–248 (LPQVFELSLENNRFTGSIPHFPP), and 249–273 (NVLKVLNLSNNQLEGPIPPALSLMD). The interval 288–319 (LESACNSPSQEANNPDSRNSSTISGQSSTDVI) is disordered. The segment covering 291–317 (ACNSPSQEANNPDSRNSSTISGQSSTD) has biased composition (polar residues). The helical transmembrane segment at 330–350 (MLIVAVCLVVLCLLIVLILII) threads the bilayer. Polar residues-rich tracts occupy residues 356–382 (SSSQNPQPVESNYSNNDRDQNAFTSSA) and 389–405 (LSGNSTYSNNQHSNSNK). The interval 356-409 (SSSQNPQPVESNYSNNDRDQNAFTSSAPDDHVTLSGNSTYSNNQHSNSNKAEAP) is disordered. The region spanning 434 to 702 (RASAEVLGSG…KEVVQSIQSL (269 aa)) is the Protein kinase domain. ATP-binding positions include 440-448 (LGSGNLGSS) and K462.

The protein belongs to the protein kinase superfamily. In terms of assembly, interacts with KIP1. Autophosphorylated. Expressed in mature pollen grains and pollen tubes, but not in style, petal, leaf, root or sepal. Very low expression in the ovary.

The protein localises to the microsome membrane. It is found in the cytoplasm. It catalyses the reaction L-seryl-[protein] + ATP = O-phospho-L-seryl-[protein] + ADP + H(+). The catalysed reaction is L-threonyl-[protein] + ATP = O-phospho-L-threonyl-[protein] + ADP + H(+). The enzyme catalyses L-tyrosyl-[protein] + ATP = O-phospho-L-tyrosyl-[protein] + ADP + H(+). Dual-specificity kinase with both serine/threonine and tyrosine kinase activities. Required for postmeiotic development of microspores. Involved in embryo sac development at the late stages of megagametogenesis. Involved in the phosphorylation of KIP1. The protein is Pollen receptor-like kinase 1 of Petunia integrifolia (Violet-flowered petunia).